A 297-amino-acid chain; its full sequence is GTPase Era (297 aa).

Residues 5–173 (RAGFVSFVGR…TTELMRLLPV (169 aa)) enclose the Era-type G domain. Residues 13-20 (GRPNVGKS) are G1. 13–20 (GRPNVGKS) lines the GTP pocket. Residues 39–43 (QTTRR) are G2. The tract at residues 60-63 (DTPG) is G3. GTP-binding positions include 60 to 64 (DTPGV) and 123 to 126 (TKID). A G4 region spans residues 123–126 (TKID). The G5 stretch occupies residues 152–154 (VSA). Residues 205–283 (VEDELPHSLA…FLSIRVKVAK (79 aa)) form the KH type-2 domain.

The protein belongs to the TRAFAC class TrmE-Era-EngA-EngB-Septin-like GTPase superfamily. Era GTPase family. Monomer.

Its subcellular location is the cytoplasm. It localises to the cell membrane. An essential GTPase that binds both GDP and GTP, with rapid nucleotide exchange. Plays a role in 16S rRNA processing and 30S ribosomal subunit biogenesis and possibly also in cell cycle regulation and energy metabolism. The chain is GTPase Era from Leifsonia xyli subsp. xyli (strain CTCB07).